The sequence spans 275 residues: NH(3)-dependent NAD(+) synthetase (275 aa).

Position 46–53 (46–53) interacts with ATP; the sequence is GISGGQDS. D52 lines the Mg(2+) pocket. R140 serves as a coordination point for deamido-NAD(+). T160 contacts ATP. Residue E165 coordinates Mg(2+). Deamido-NAD(+) contacts are provided by K173 and D180. The ATP site is built by K189 and T211. 260–261 provides a ligand contact to deamido-NAD(+); that stretch reads HK.

It belongs to the NAD synthetase family. In terms of assembly, homodimer.

The enzyme catalyses deamido-NAD(+) + NH4(+) + ATP = AMP + diphosphate + NAD(+) + H(+). It functions in the pathway cofactor biosynthesis; NAD(+) biosynthesis; NAD(+) from deamido-NAD(+) (ammonia route): step 1/1. Catalyzes the ATP-dependent amidation of deamido-NAD to form NAD. Uses ammonia as a nitrogen source. The polypeptide is NH(3)-dependent NAD(+) synthetase (Salmonella dublin (strain CT_02021853)).